A 454-amino-acid chain; its full sequence is N-myc 2 proto-oncogene protein (454 aa).

3 disordered regions span residues 132-166 (SEKM…HSGT), 230-269 (VAAP…DEEE), and 325-374 (PSPY…VRRR). Residues 151 to 161 (PGAGAASPAGR) show a composition bias toward low complexity. Residues 256-269 (ALSDEVDEEEDEEE) are compositionally biased toward acidic residues. Positions 363–374 (RKSDSEDSVRRR) are enriched in basic and acidic residues. One can recognise a bHLH domain in the interval 371–423 (VRRRNHNILERQRRNDLRSSFTTLRDHVPELVKNEKAAKVVILKKACEYVHYL). A leucine-zipper region spans residues 423–444 (LQAKEHQLLMEKEKLQARQQQL).

Efficient DNA binding requires dimerization with another bHLH protein.

It is found in the nucleus. The polypeptide is N-myc 2 proto-oncogene protein (N-MYC2) (Marmota monax (Woodchuck)).